Reading from the N-terminus, the 388-residue chain is AdoMet-dependent heme synthase (388 aa).

The span at 1–12 shows a compositional bias: low complexity; the sequence is MHNANHPHGNGH. The interval 1-29 is disordered; the sequence is MHNANHPHGNGHPAEKKGMGAHSGAMNMP. Residues 34–257 enclose the Radical SAM core domain; that stretch reads DGSPACRLIA…TSMHLKATCA (224 aa). [4Fe-4S] cluster contacts are provided by C50, C54, and C57.

The protein belongs to the radical SAM superfamily. Requires [4Fe-4S] cluster as cofactor.

It carries out the reaction Fe-coproporphyrin III + 2 S-adenosyl-L-methionine = heme b + 2 5'-deoxyadenosine + 2 L-methionine + 2 CO2. It participates in porphyrin-containing compound metabolism; protoheme biosynthesis. Involved in siroheme-dependent heme b biosynthesis. Catalyzes the conversion of Fe-coproporphyrin III into heme by the oxidative decarboxylation of two propionate side chains. This is AdoMet-dependent heme synthase from Oleidesulfovibrio alaskensis (strain ATCC BAA-1058 / DSM 17464 / G20) (Desulfovibrio alaskensis).